Here is a 271-residue protein sequence, read N- to C-terminus: Tryptophan synthase alpha chain (271 aa).

Residues Glu-49 and Asp-60 each act as proton acceptor in the active site.

The protein belongs to the TrpA family. As to quaternary structure, tetramer of two alpha and two beta chains.

It carries out the reaction (1S,2R)-1-C-(indol-3-yl)glycerol 3-phosphate + L-serine = D-glyceraldehyde 3-phosphate + L-tryptophan + H2O. Its pathway is amino-acid biosynthesis; L-tryptophan biosynthesis; L-tryptophan from chorismate: step 5/5. The alpha subunit is responsible for the aldol cleavage of indoleglycerol phosphate to indole and glyceraldehyde 3-phosphate. This chain is Tryptophan synthase alpha chain, found in Yersinia pestis bv. Antiqua (strain Angola).